The sequence spans 340 residues: Methane monooxygenase component C (340 aa).

One can recognise a 2Fe-2S ferredoxin-type domain in the interval 1–92 (MYQIVIETED…DLHLLVPYTY (92 aa)). [2Fe-2S] cluster-binding residues include cysteine 37, cysteine 41, cysteine 44, and cysteine 76. Residues 101-205 (QTNWLAEILA…RGPAGSFFLH (105 aa)) enclose the FAD-binding FR-type domain. Position 215–229 (215–229 (VAGGTGLSPVLSMIR)) interacts with FAD.

As to quaternary structure, the soluble methane monooxygenase (sMMO) consists of four components A/MMOH (composed of alpha/MmoX, beta/MmoY and gamma/MmoZ), B/MMOB (MmoB), C/MMOR (MmoC) and D/MMOD (MmoD). The cofactor is [2Fe-2S] cluster.

The enzyme catalyses methane + NADH + O2 + H(+) = methanol + NAD(+) + H2O. It carries out the reaction methane + NADPH + O2 + H(+) = methanol + NADP(+) + H2O. In terms of biological role, responsible for the initial oxygenation of methane to methanol in methanotrophs. It also catalyzes the monohydroxylation of a variety of unactivated alkenes, alicyclic, aromatic and heterocyclic compounds. The component C is the iron-sulfur flavoprotein of sMMO. This is Methane monooxygenase component C (mmoC) from Methylosinus trichosporium.